Consider the following 319-residue polypeptide: Homoserine O-acetyltransferase (319 aa).

Cys-142 (acyl-thioester intermediate) is an active-site residue. Residues Lys-163 and Ser-192 each coordinate substrate. His-235 serves as the catalytic Proton acceptor. The active site involves Glu-237. Arg-249 is a binding site for substrate.

Belongs to the MetA family.

It localises to the cytoplasm. It catalyses the reaction L-homoserine + acetyl-CoA = O-acetyl-L-homoserine + CoA. It functions in the pathway amino-acid biosynthesis; L-methionine biosynthesis via de novo pathway; O-acetyl-L-homoserine from L-homoserine: step 1/1. Its function is as follows. Transfers an acetyl group from acetyl-CoA to L-homoserine, forming acetyl-L-homoserine. In Lactococcus lactis subsp. cremoris (strain MG1363), this protein is Homoserine O-acetyltransferase.